We begin with the raw amino-acid sequence, 132 residues long: Histone H2A.1 (132 aa).

It belongs to the histone H2A family. The nucleosome is a histone octamer containing two molecules each of H2A, H2B, H3 and H4 assembled in one H3-H4 heterotetramer and two H2A-H2B heterodimers. The octamer wraps approximately 147 bp of DNA.

The protein localises to the nucleus. It is found in the chromosome. Core component of nucleosome. Nucleosomes wrap and compact DNA into chromatin, limiting DNA accessibility to the cellular machineries which require DNA as a template. Histones thereby play a central role in transcription regulation, DNA repair, DNA replication and chromosomal stability. DNA accessibility is regulated via a complex set of post-translational modifications of histones, also called histone code, and nucleosome remodeling. This Leishmania infantum protein is Histone H2A.1.